Reading from the N-terminus, the 222-residue chain is ATP synthase F(0) complex subunit a (222 aa).

6 consecutive transmembrane segments (helical) span residues 8–28, 64–84, 93–113, 127–147, 160–180, and 197–219; these read FFYV…ILLP, WSLM…LGLL, QLTV…VPGF, QGTP…SLLI, ITAG…LSSI, and ILEL…LYLH.

Belongs to the ATPase A chain family. Component of the ATP synthase complex composed at least of ATP5F1A/subunit alpha, ATP5F1B/subunit beta, ATP5MC1/subunit c (homooctomer), MT-ATP6/subunit a, MT-ATP8/subunit 8, ATP5ME/subunit e, ATP5MF/subunit f, ATP5MG/subunit g, ATP5MK/subunit k, ATP5MJ/subunit j, ATP5F1C/subunit gamma, ATP5F1D/subunit delta, ATP5F1E/subunit epsilon, ATP5PF/subunit F6, ATP5PB/subunit b, ATP5PD/subunit d, ATP5PO/subunit OSCP. ATP synthase complex consists of a soluble F(1) head domain (subunits alpha(3) and beta(3)) - the catalytic core - and a membrane F(0) domain - the membrane proton channel (subunits c, a, 8, e, f, g, k and j). These two domains are linked by a central stalk (subunits gamma, delta, and epsilon) rotating inside the F1 region and a stationary peripheral stalk (subunits F6, b, d, and OSCP). Interacts with DNAJC30; interaction is direct.

Its subcellular location is the mitochondrion inner membrane. It carries out the reaction H(+)(in) = H(+)(out). Functionally, subunit a, of the mitochondrial membrane ATP synthase complex (F(1)F(0) ATP synthase or Complex V) that produces ATP from ADP in the presence of a proton gradient across the membrane which is generated by electron transport complexes of the respiratory chain. ATP synthase complex consist of a soluble F(1) head domain - the catalytic core - and a membrane F(1) domain - the membrane proton channel. These two domains are linked by a central stalk rotating inside the F(1) region and a stationary peripheral stalk. During catalysis, ATP synthesis in the catalytic domain of F(1) is coupled via a rotary mechanism of the central stalk subunits to proton translocation. With the subunit c (ATP5MC1), forms the proton-conducting channel in the F(0) domain, that contains two crucial half-channels (inlet and outlet) that facilitate proton movement from the mitochondrial intermembrane space (IMS) into the matrix. Protons are taken up via the inlet half-channel and released through the outlet half-channel, following a Grotthuss mechanism. The chain is ATP synthase F(0) complex subunit a from Loxodonta africana (African elephant).